Reading from the N-terminus, the 186-residue chain is Calcium-binding protein NCSA (186 aa).

4 consecutive EF-hand domains span residues 40-58, 66-93, 94-129, and 142-177; these read SGTI…MGVG, LFNV…ITRG, TPEE…MYKL, and DPHD…NPDI. Positions 107, 109, 111, 113, 118, 155, 157, 159, 161, and 166 each coordinate Ca(2+).

This sequence belongs to the recoverin family.

Functionally, may prevent cells from entering development prematurely in the presence of environmental nutrients. The chain is Calcium-binding protein NCSA (ncsA) from Dictyostelium discoideum (Social amoeba).